Here is a 303-residue protein sequence, read N- to C-terminus: Methionyl-tRNA formyltransferase (303 aa).

109–112 (SLLP) contacts (6S)-5,6,7,8-tetrahydrofolate.

The protein belongs to the Fmt family.

The enzyme catalyses L-methionyl-tRNA(fMet) + (6R)-10-formyltetrahydrofolate = N-formyl-L-methionyl-tRNA(fMet) + (6S)-5,6,7,8-tetrahydrofolate + H(+). Functionally, attaches a formyl group to the free amino group of methionyl-tRNA(fMet). The formyl group appears to play a dual role in the initiator identity of N-formylmethionyl-tRNA by promoting its recognition by IF2 and preventing the misappropriation of this tRNA by the elongation apparatus. The polypeptide is Methionyl-tRNA formyltransferase (Helicobacter pylori (strain ATCC 700392 / 26695) (Campylobacter pylori)).